A 172-amino-acid polypeptide reads, in one-letter code: Translationally-controlled tumor protein homolog (172 aa).

One can recognise a TCTP domain in the interval 1–172 (MIIYRDCISQ…FKDGLEIEKC (172 aa)). Serine 46 carries the phosphoserine; by PLK1 modification.

This sequence belongs to the TCTP family.

The protein localises to the cytoplasm. Involved in calcium binding and microtubule stabilization. The sequence is that of Translationally-controlled tumor protein homolog (TPT1) from Gallus gallus (Chicken).